A 293-amino-acid polypeptide reads, in one-letter code: DNA repair protein RecO (293 aa).

This sequence belongs to the RecO family.

In terms of biological role, involved in DNA repair and RecF pathway recombination. The chain is DNA repair protein RecO from Acaryochloris marina (strain MBIC 11017).